A 143-amino-acid polypeptide reads, in one-letter code: Large ribosomal subunit protein uL11 (143 aa).

It belongs to the universal ribosomal protein uL11 family. As to quaternary structure, part of the ribosomal stalk of the 50S ribosomal subunit. Interacts with L10 and the large rRNA to form the base of the stalk. L10 forms an elongated spine to which L12 dimers bind in a sequential fashion forming a multimeric L10(L12)X complex. In terms of processing, one or more lysine residues are methylated.

Its function is as follows. Forms part of the ribosomal stalk which helps the ribosome interact with GTP-bound translation factors. In Beutenbergia cavernae (strain ATCC BAA-8 / DSM 12333 / CCUG 43141 / JCM 11478 / NBRC 16432 / NCIMB 13614 / HKI 0122), this protein is Large ribosomal subunit protein uL11.